The sequence spans 682 residues: Protein ACTIVITY OF BC1 COMPLEX KINASE 1, chloroplastic (682 aa).

A chloroplast-targeting transit peptide spans 1-79; sequence MESIHCNSLL…NSTDASVMTT (79 aa). The 332-residue stretch at 236–567 folds into the Protein kinase domain; that stretch reads KISSQTIAAA…IQVLFKDGVF (332 aa). Residues 242–250 and lysine 265 each bind ATP; that span reads IAAASLGQV. The Proton acceptor role is filled by aspartate 400.

This sequence belongs to the protein kinase superfamily. ADCK protein kinase family. As to quaternary structure, interacts with ABC1K3 in plastoglobules (PG). In terms of tissue distribution, expressed in all tissues (e.g. especially in leaves) at all developmental stages from seed germination to flowering, except in the root tips.

It localises to the plastid. The protein resides in the chloroplast. It is found in the plastoglobule. The catalysed reaction is L-seryl-[protein] + ATP = O-phospho-L-seryl-[protein] + ADP + H(+). It carries out the reaction L-threonyl-[protein] + ATP = O-phospho-L-threonyl-[protein] + ADP + H(+). Its function is as follows. Kinase that can phosphorylate the tocopherol cyclase VTE1, a key enzyme of tocopherol (vitamin E) metabolism and involved in the recycling of oxidated alpha-tocopherol quinone, possibly stabilizing it at plastoglobules. Also regulates plastoglobule protein composition. Prevents photodamage of chloroplasts under continuous red light, thus working in opposition to ABC1K3. Together with ABC1K1, contributes to plastoglobule (PG) function in prenyl-lipid metabolism, stress response, and thylakoid remodeling. Involved in chlorophyll degradation and in the maintenance of the number of chlorophyll-binding photosynthetic thylakoid membranes. Ensures photosynthetic electron transport by regulating the homeostasis of plastoquinone, beta-carotene and xanthophyll lutein, as well as membrane antioxidant tocopherol metabolism. Seems to affect specifically stability or turnover of D1 protein, product of psbA, one of the four core subunits of the photosystem II (PSII). Required for photooxidative stress responses, including the induction of oxidative stress response genes (e.g. FSD1, CSD1, CAT1, and UTG71C1), to prevent photosystem II core and chlorophyll degradations. The protein is Protein ACTIVITY OF BC1 COMPLEX KINASE 1, chloroplastic of Arabidopsis thaliana (Mouse-ear cress).